A 79-amino-acid chain; its full sequence is Small ribosomal subunit protein bS18 (79 aa).

Belongs to the bacterial ribosomal protein bS18 family. Part of the 30S ribosomal subunit. Forms a tight heterodimer with protein bS6.

Functionally, binds as a heterodimer with protein bS6 to the central domain of the 16S rRNA, where it helps stabilize the platform of the 30S subunit. The sequence is that of Small ribosomal subunit protein bS18 from Streptococcus thermophilus (strain CNRZ 1066).